The chain runs to 215 residues: Adenylate kinase (215 aa).

10–15 serves as a coordination point for ATP; the sequence is GAGKGT. The NMP stretch occupies residues 30 to 59; the sequence is STGDMLRAAVKAGTELGLKAKSVMDAGGLV. Residues threonine 31, arginine 36, 57–59, 85–88, and glutamine 92 contribute to the AMP site; these read GLV and GFPR. The segment at 122 to 159 is LID; that stretch reads GRRVHPASGRVYHTEYNPPKVAGKDDVSGEELVQREDD. ATP is bound by residues arginine 123 and 132–133; that span reads VY. Residues arginine 156 and arginine 167 each coordinate AMP. Glycine 201 lines the ATP pocket.

The protein belongs to the adenylate kinase family. As to quaternary structure, monomer.

It is found in the cytoplasm. The catalysed reaction is AMP + ATP = 2 ADP. It participates in purine metabolism; AMP biosynthesis via salvage pathway; AMP from ADP: step 1/1. Its function is as follows. Catalyzes the reversible transfer of the terminal phosphate group between ATP and AMP. Plays an important role in cellular energy homeostasis and in adenine nucleotide metabolism. The protein is Adenylate kinase of Ectopseudomonas mendocina (strain ymp) (Pseudomonas mendocina).